Consider the following 148-residue polypeptide: Snaclec convulxin subunit beta (148 aa).

Positions 1 to 23 (MGRFIFVSFGLLVVFLSLSGSEA) are cleaved as a signal peptide. Intrachain disulfides connect Cys-27-Cys-38, Cys-55-Cys-144, and Cys-121-Cys-136. The C-type lectin domain occupies 34 to 148 (YDRYCYKVFK…TYSFVCKFEA (115 aa)).

It belongs to the snaclec family. Tetramer of heterodimers of alpha and beta subunits (alphabeta)(4); disulfide-linked. In terms of tissue distribution, expressed by the venom gland.

It localises to the secreted. Functionally, snake venom lectin that activates platelets by binding to the platelet collagen receptor glycoprotein VI (GP6). The indirect activation of integrin alpha-IIb/beta-3 (ITGA2B/ITGB3) also induced by the toxin is upstream the cytoskeletal translocation of GPIb, FcRgamma (FCER1G) and 14-3-3zeta (YWHAZ). The sequence is that of Snaclec convulxin subunit beta from Crotalus durissus terrificus (South American rattlesnake).